The sequence spans 247 residues: Mast cell protease 8 (247 aa).

A signal peptide spans 1-19; it reads MFLLLVLLVAALPVNAEGG. A propeptide (activation peptide) is located at residue E20. Positions 21-242 constitute a Peptidase S1 domain; the sequence is IIWGTESKPH…FMPWIRKTMK (222 aa). N-linked (GlcNAc...) asparagine glycosylation occurs at N41. C49 and C65 are oxidised to a cystine. The active-site Charge relay system is the H64. N-linked (GlcNAc...) asparagine glycans are attached at residues N71 and N101. D107 (charge relay system) is an active-site residue. 2 cysteine pairs are disulfide-bonded: C141–C206 and C171–C185. N-linked (GlcNAc...) asparagine glycosylation is found at N151 and N179. S200 (charge relay system) is an active-site residue.

The protein belongs to the peptidase S1 family. Granzyme subfamily.

It localises to the secreted. It is found in the cytoplasmic granule. The polypeptide is Mast cell protease 8 (Mcpt8) (Mus musculus (Mouse)).